The primary structure comprises 508 residues: Galactose-1-phosphate uridylyltransferase (508 aa).

This sequence belongs to the galactose-1-phosphate uridylyltransferase type 2 family.

It localises to the cytoplasm. The catalysed reaction is alpha-D-galactose 1-phosphate + UDP-alpha-D-glucose = alpha-D-glucose 1-phosphate + UDP-alpha-D-galactose. Its pathway is carbohydrate metabolism; galactose metabolism. The protein is Galactose-1-phosphate uridylyltransferase (galT) of Halalkalibacterium halodurans (strain ATCC BAA-125 / DSM 18197 / FERM 7344 / JCM 9153 / C-125) (Bacillus halodurans).